Consider the following 129-residue polypeptide: CD59B glycoprotein (129 aa).

A signal peptide spans 1-23 (MRAQRGLILLLLLLAVFCSTAVS). Residues 24–107 (LKCYNCLDPV…GLEEPNNAET (84 aa)) form the UPAR/Ly6 domain. Intrachain disulfides connect Cys26–Cys49, Cys29–Cys36, Cys42–Cys62, Cys68–Cys86, and Cys87–Cys92. Asn39 is a glycosylation site (N-linked (GlcNAc...) asparagine). Asn104 is lipidated: GPI-anchor amidated asparagine. Residues 105 to 129 (AETSSLRKTALLGTSVLVAILKFCF) constitute a propeptide, removed in mature form.

As to quaternary structure, interacts with T-cell surface antigen CD2. N- and O-glycosylated. In terms of tissue distribution, widely expressed in the kidneys, brain, lungs, spleen and testis Testis-specific.

Its subcellular location is the cell membrane. The protein resides in the secreted. In terms of biological role, potent inhibitor of the complement membrane attack complex (MAC) action, which protects self-cells from damage during complement activation. Acts by binding to the beta-haipins of C8 (C8A and C8B) components of the assembling MAC, forming an intermolecular beta-sheet that prevents incorporation of the multiple copies of C9 required for complete formation of the osmolytic pore. This is CD59B glycoprotein from Mus musculus (Mouse).